The sequence spans 819 residues: Disintegrin and metalloproteinase domain-containing protein 9 (819 aa).

A signal peptide spans M1–G28. At A29–D697 the chain is on the extracellular side. N125, N144, N154, and N231 each carry an N-linked (GlcNAc...) asparagine glycan. Positions R212–P406 constitute a Peptidase M12B domain. Disulfide bonds link C322/C401, C363/C385, C365/C370, C473/C493, C644/C656, C650/C662, and C664/C673. H347 lines the Zn(2+) pocket. E348 is an active-site residue. 2 residues coordinate Zn(2+): H351 and H357. 2 N-linked (GlcNAc...) asparagine glycosylation sites follow: N381 and N487. A Disintegrin domain is found at A414 to N501. In terms of domain architecture, EGF-like spans C644–G698. A helical transmembrane segment spans residues G698 to I718. Over K719–T819 the chain is Cytoplasmic. Disordered stretches follow at residues Q734–P763 and A780–T819. Positions T735–P750 are enriched in polar residues. S758 is modified (phosphoserine). Position 761 is a phosphothreonine (T761).

Interacts with SH3GL2 and SNX9 through its cytoplasmic tail. Interacts with ITGA6. It depends on Zn(2+) as a cofactor. Post-translationally, proteolytically cleaved in the trans-Golgi network before it reaches the plasma membrane to generate a mature protein. The removal of the pro-domain occurs via cleavage at two different sites. Processed most likely by a pro-protein convertase such as furin, at the boundary between the pro-domain and the catalytic domain. An additional upstream cleavage pro-protein convertase site (Arg-56/Glu-57) has an important role in the activation of ADAM9. Phosphorylation is induced in vitro by phorbol-12-myristate-13-acetate (PMA). In terms of tissue distribution, widely expressed. Expressed in chondrocytes. Isoform 2 is highly expressed in liver and heart.

The protein localises to the cell membrane. The protein resides in the secreted. Synthesized as an inactive form which is proteolytically cleaved to generate an active enzyme. Processing at the upstream site is particularly important for activation of the proenzyme, whereas processing at the boundary between the pro-domain and the catalytic domain does not appear to be essential. Inhibited by hydroxamic acid-based inhibitors. Metalloprotease that cleaves and releases a number of molecules with important roles in tumorigenesis and angiogenesis, such as TEK, KDR, EPHB4, CD40, VCAM1 and CDH5. May mediate cell-cell, cell-matrix interactions and regulate the motility of cells via interactions with integrins. In terms of biological role, may act as alpha-secretase for amyloid precursor protein (APP). In Homo sapiens (Human), this protein is Disintegrin and metalloproteinase domain-containing protein 9 (ADAM9).